A 146-amino-acid chain; its full sequence is Small ribosomal subunit protein uS13A (146 aa).

N-acetylserine is present on S2. K36 is covalently cross-linked (Glycyl lysine isopeptide (Lys-Gly) (interchain with G-Cter in ubiquitin)). N6-methyllysine; by RKM1 is present on K48. Residues K49, K80, and K96 each participate in a glycyl lysine isopeptide (Lys-Gly) (interchain with G-Cter in ubiquitin) cross-link.

It belongs to the universal ribosomal protein uS13 family. Component of the small ribosomal subunit (SSU). Mature yeast ribosomes consist of a small (40S) and a large (60S) subunit. The 40S small subunit contains 1 molecule of ribosomal RNA (18S rRNA) and 33 different proteins (encoded by 57 genes). The large 60S subunit contains 3 rRNA molecules (25S, 5.8S and 5S rRNA) and 46 different proteins (encoded by 81 genes). In terms of processing, N-terminally acetylated by acetyltransferase NatA.

Its subcellular location is the cytoplasm. Component of the ribosome, a large ribonucleoprotein complex responsible for the synthesis of proteins in the cell. The small ribosomal subunit (SSU) binds messenger RNAs (mRNAs) and translates the encoded message by selecting cognate aminoacyl-transfer RNA (tRNA) molecules. The large subunit (LSU) contains the ribosomal catalytic site termed the peptidyl transferase center (PTC), which catalyzes the formation of peptide bonds, thereby polymerizing the amino acids delivered by tRNAs into a polypeptide chain. The nascent polypeptides leave the ribosome through a tunnel in the LSU and interact with protein factors that function in enzymatic processing, targeting, and the membrane insertion of nascent chains at the exit of the ribosomal tunnel. This Saccharomyces cerevisiae (strain ATCC 204508 / S288c) (Baker's yeast) protein is Small ribosomal subunit protein uS13A.